Here is a 431-residue protein sequence, read N- to C-terminus: 4-hydroxy-3-methylbut-2-en-1-yl diphosphate synthase (flavodoxin) (431 aa).

4 residues coordinate [4Fe-4S] cluster: cysteine 310, cysteine 313, cysteine 356, and glutamate 363.

It belongs to the IspG family. The cofactor is [4Fe-4S] cluster.

It catalyses the reaction (2E)-4-hydroxy-3-methylbut-2-enyl diphosphate + oxidized [flavodoxin] + H2O + 2 H(+) = 2-C-methyl-D-erythritol 2,4-cyclic diphosphate + reduced [flavodoxin]. Its pathway is isoprenoid biosynthesis; isopentenyl diphosphate biosynthesis via DXP pathway; isopentenyl diphosphate from 1-deoxy-D-xylulose 5-phosphate: step 5/6. In terms of biological role, converts 2C-methyl-D-erythritol 2,4-cyclodiphosphate (ME-2,4cPP) into 1-hydroxy-2-methyl-2-(E)-butenyl 4-diphosphate. The chain is 4-hydroxy-3-methylbut-2-en-1-yl diphosphate synthase (flavodoxin) from Rhodopseudomonas palustris (strain HaA2).